Consider the following 309-residue polypeptide: NADH-cytochrome b5 reductase 1 (309 aa).

Residues 31-51 traverse the membrane as a helical segment; it reads DWVVYSVALALALGTWKFFQL. The region spanning 60-168 is the FAD-binding FR-type domain; sequence TKFQEFELKE…RGPKGAFVYQ (109 aa). FAD contacts are provided by residues 148–163 and 174–208; these read AGLS…GPKG and HFGM…QVDL.

Belongs to the flavoprotein pyridine nucleotide cytochrome reductase family. In terms of assembly, monomer. Component of the 2-(3-amino-3-carboxypropyl)histidine synthase complex composed of DPH1, DPH2, DPH3 and a NADH-dependent reductase, predominantly CBR1. Requires FAD as cofactor.

It localises to the mitochondrion outer membrane. The catalysed reaction is 2 Fe(III)-[cytochrome b5] + NADH = 2 Fe(II)-[cytochrome b5] + NAD(+) + H(+). It catalyses the reaction 2 Fe(3+)-[Dph3] + NADH = 2 Fe(2+)-[Dph3] + NAD(+) + H(+). The protein operates within protein modification; peptidyl-diphthamide biosynthesis. Its function is as follows. NADH-dependent reductase for DPH3 and cytochrome b5. Required for the first step of diphthamide biosynthesis, a post-translational modification of histidine which occurs in elongation factor 2. DPH1 and DPH2 transfer a 3-amino-3-carboxypropyl (ACP) group from S-adenosyl-L-methionine (SAM) to a histidine residue, the reaction is assisted by a reduction system comprising DPH3 and a NADH-dependent reductase, predominantly CBR1. By reducing DPH3, also involved in the formation of the tRNA wobble base modification mcm5s 2U (5-methoxycarbonylmethyl-2-thiouridine), mediated by the elongator complex. The cytochrome b5/NADH cytochrome b5 reductase electron transfer system supports the catalytic activity of several sterol biosynthetic enzymes. The sequence is that of NADH-cytochrome b5 reductase 1 (CBR1) from Pyricularia oryzae (strain 70-15 / ATCC MYA-4617 / FGSC 8958) (Rice blast fungus).